A 251-amino-acid polypeptide reads, in one-letter code: Fibroblast growth factor 23 (251 aa).

The signal sequence occupies residues 1–24; the sequence is MLGTCLRLLVGVLCTVCSLGTARA. Cys95 and Cys113 are disulfide-bonded. O-linked (GalNAc) threonine glycosylation is found at Thr171 and Thr178. The disordered stretch occupies residues 175–251; it reads RRHTRSAEDP…DRCRPFPRFV (77 aa). The span at 179 to 189 shows a compositional bias: basic and acidic residues; the sequence is RSAEDPPERDP. Ser180 bears the Phosphoserine; by FAM20C mark.

Belongs to the heparin-binding growth factors family. Interacts with FGFR1. Interacts with FGFR2, FGFR3 and FGFR4. Affinity between fibroblast growth factors (FGFs) and their receptors is increased by KL and heparan sulfate glycosaminoglycans that function as coreceptors. Post-translationally, following secretion this protein is inactivated by cleavage into a N-terminal fragment and a C-terminal fragment. The processing is effected by proprotein convertases. O-glycosylated at Thr-171 and Thr-178 by GALNT3 and glycosylation of Thr-178 requires previous glycosylation at Thr171. Glycosylation is necessary for secretion; it blocks processing by proprotein convertases when the O-glycan is alpha 2,6-sialylated. Competition between proprotein convertase cleavage and block of cleavage by O-glycosylation determines the level of secreted active FGF23. In terms of processing, phosphorylation at Ser-180 mediated by FAM20C slows down glycosylation at Thr-178 notably. In terms of tissue distribution, mainly expressed in the brain and thymus at low levels. In brain; preferentially expressed in the ventrolateral thalamic nucleus.

The protein resides in the secreted. Its function is as follows. Regulator of phosphate homeostasis. Inhibits renal tubular phosphate transport by reducing SLC34A1 levels. Acts directly on the parathyroid to decrease PTH secretion. Regulator of vitamin-D metabolism. Negatively regulates osteoblasts differentiation and matrix mineralization. Up-regulates EGR1 expression in the presence of KL. The chain is Fibroblast growth factor 23 (Fgf23) from Mus musculus (Mouse).